We begin with the raw amino-acid sequence, 333 residues long: Probable tRNA pseudouridine synthase B (333 aa).

The Nucleophile role is filled by aspartate 71. One can recognise a PUA domain in the interval leucine 238–methionine 313.

Belongs to the pseudouridine synthase TruB family. Type 2 subfamily.

The catalysed reaction is uridine(55) in tRNA = pseudouridine(55) in tRNA. Could be responsible for synthesis of pseudouridine from uracil-55 in the psi GC loop of transfer RNAs. This is Probable tRNA pseudouridine synthase B from Pyrobaculum calidifontis (strain DSM 21063 / JCM 11548 / VA1).